The primary structure comprises 224 residues: 7-cyano-7-deazaguanine synthase (224 aa).

12-22 contacts ATP; it reads LSGGLDSSTVT. Zn(2+) is bound by residues Cys193, Cys201, Cys204, and Cys207.

This sequence belongs to the QueC family. Zn(2+) is required as a cofactor.

The enzyme catalyses 7-carboxy-7-deazaguanine + NH4(+) + ATP = 7-cyano-7-deazaguanine + ADP + phosphate + H2O + H(+). It functions in the pathway purine metabolism; 7-cyano-7-deazaguanine biosynthesis. Catalyzes the ATP-dependent conversion of 7-carboxy-7-deazaguanine (CDG) to 7-cyano-7-deazaguanine (preQ(0)). The sequence is that of 7-cyano-7-deazaguanine synthase from Prochlorococcus marinus (strain AS9601).